The chain runs to 3462 residues: DNA-directed RNA polymerase subunit beta'' (3462 aa).

4 residues coordinate Zn(2+): Cys-263, Cys-335, Cys-342, and Cys-345. Residues 541–1085 (KIDDQELSSV…PNKIFSSNLF (545 aa)) form an insert-1 region. The tract at residues 1528–1585 (PQSANERKQILKKARQKLRLFPLNLNEKKNRFSSVTLDLLRDQTTLHKMQSCGEAESG) is insert-2. Residues 1602-1699 (KKITEIFTFC…FSKQMGNRLL (98 aa)) are insert-3. The segment at 1938–2168 (LKNKMNQSFS…SQASWILETN (231 aa)) is insert-4. An insert-5 region spans residues 2320-2870 (NLVSGKLNFL…KKKIAKEGAF (551 aa)). An insert-6 region spans residues 2972-3196 (SKSQRGWFHN…IGQLLRYGKE (225 aa)).

This sequence belongs to the RNA polymerase beta' chain family. RpoC2 subfamily. In plastids the minimal PEP RNA polymerase catalytic core is composed of four subunits: alpha, beta, beta', and beta''. When a (nuclear-encoded) sigma factor is associated with the core the holoenzyme is formed, which can initiate transcription. The cofactor is Zn(2+).

Its subcellular location is the plastid. The protein resides in the chloroplast. The enzyme catalyses RNA(n) + a ribonucleoside 5'-triphosphate = RNA(n+1) + diphosphate. Its function is as follows. DNA-dependent RNA polymerase catalyzes the transcription of DNA into RNA using the four ribonucleoside triphosphates as substrates. The protein is DNA-directed RNA polymerase subunit beta'' of Tupiella akineta (Green alga).